The primary structure comprises 544 residues: Chaperonin GroEL (544 aa).

Residues 30-33 (TLGP), K51, 87-91 (DGTTT), G415, 481-483 (DAL), and D497 contribute to the ATP site.

It belongs to the chaperonin (HSP60) family. In terms of assembly, forms a cylinder of 14 subunits composed of two heptameric rings stacked back-to-back. Interacts with the co-chaperonin GroES.

The protein localises to the cytoplasm. The catalysed reaction is ATP + H2O + a folded polypeptide = ADP + phosphate + an unfolded polypeptide.. In terms of biological role, together with its co-chaperonin GroES, plays an essential role in assisting protein folding. The GroEL-GroES system forms a nano-cage that allows encapsulation of the non-native substrate proteins and provides a physical environment optimized to promote and accelerate protein folding. This chain is Chaperonin GroEL, found in Chlamydia trachomatis serovar A (strain ATCC VR-571B / DSM 19440 / HAR-13).